A 198-amino-acid polypeptide reads, in one-letter code: HTH-type transcriptional repressor DhaR (198 aa).

In terms of domain architecture, HTH tetR-type spans 4–64 (TPVRQHLVEK…QVLQEFFSDL (61 aa)).

In terms of biological role, transcriptional repressor for the dhaA haloalkane dehalogenase gene. In Mycobacterium sp. (strain GP1), this protein is HTH-type transcriptional repressor DhaR (dhaR).